The sequence spans 368 residues: Trans-enoyl reductase TwmE (368 aa).

49 to 52 (SDYK) serves as a coordination point for NADP(+). 135-142 (FKAATLGT) is a binding site for substrate. Residues 204-207 (SPRS), Tyr222, and 269-270 (LE) contribute to the NADP(+) site. Residue 290 to 294 (SAELY) participates in substrate binding. 360-361 (HP) is a binding site for NADP(+).

Belongs to the zinc-containing alcohol dehydrogenase family. As to quaternary structure, monomer.

The protein operates within secondary metabolite biosynthesis. Its function is as follows. Trans-enoyl reductase; part of the gene cluster that mediates the biosynthesis of wortmanamides A and B, reduced long-chain polyketides amidated with a specific omega-amino acid, 5-aminopentanoic acid (5PA). The PKS modules of TwmB are involved in the synthesis of the polyketide backbone, whereas the non-canonical C domain of TwmB is a bonafide condensation domain that specifically selects 5PA and catalyzes amidation to release polyketide chain. The C domain clearly prefers C16 and C18 fatty acyl substrates, which is consistent with simultaneous formation of both octaketide and nonaketide acyl amides wortmanamides A and B. Because TwmB lacks a designated enoylreductase (ER) domain, the required activity is provided the enoyl reductase TwmE. The roles of the remaining enzymes have still to be clarified. This Talaromyces wortmannii (Penicillium wortmannii) protein is Trans-enoyl reductase TwmE.